We begin with the raw amino-acid sequence, 189 residues long: Molybdenum cofactor guanylyltransferase (189 aa).

GTP is bound by residues 12–14, lysine 24, aspartate 68, and aspartate 94; that span reads LAG. Mg(2+) is bound at residue aspartate 94.

Belongs to the MobA family. In terms of assembly, monomer. Mg(2+) is required as a cofactor.

Its subcellular location is the cytoplasm. It catalyses the reaction Mo-molybdopterin + GTP + H(+) = Mo-molybdopterin guanine dinucleotide + diphosphate. In terms of biological role, transfers a GMP moiety from GTP to Mo-molybdopterin (Mo-MPT) cofactor (Moco or molybdenum cofactor) to form Mo-molybdopterin guanine dinucleotide (Mo-MGD) cofactor. The chain is Molybdenum cofactor guanylyltransferase from Xanthomonas euvesicatoria pv. vesicatoria (strain 85-10) (Xanthomonas campestris pv. vesicatoria).